Here is a 24-residue protein sequence, read N- to C-terminus: Alpha-lactalbumin (24 aa).

It belongs to the glycosyl hydrolase 22 family. Lactose synthase (LS) is a heterodimer of a catalytic component, beta1,4-galactosyltransferase (beta4Gal-T1) and a regulatory component, alpha-lactalbumin (LA). Post-translationally, glycosylated (50% of the proteins). Mammary gland specific. Secreted in milk.

It localises to the secreted. Its function is as follows. Regulatory subunit of lactose synthase, changes the substrate specificity of galactosyltransferase in the mammary gland making glucose a good acceptor substrate for this enzyme. This enables LS to synthesize lactose, the major carbohydrate component of milk. In other tissues, galactosyltransferase transfers galactose onto the N-acetylglucosamine of the oligosaccharide chains in glycoproteins. The protein is Alpha-lactalbumin (LALBA) of Felis catus (Cat).